The following is a 2360-amino-acid chain: DNA (cytosine-5-)-methyltransferase DMT5 (2360 aa).

The 460-residue stretch at 48–507 folds into the SAM-dependent MTase C5-type domain; that stretch reads FTVGTMCSGT…LCILIAERQV (460 aa). The active site involves cysteine 146. The Helicase ATP-binding domain maps to 1258-1575; it reads AEVVNRARGG…CAIADLVNMH (318 aa). Residue 1271 to 1278 participates in ATP binding; the sequence is HDVGFGKT. Residues 1451–1498 are disordered; the sequence is SRRKDQKSKATARTQRAKKKSKKPRRTAAAAAESDHSAESDSDSAMDD. Positions 1465 to 1476 are enriched in basic residues; it reads QRAKKKSKKPRR. The RING-type; degenerate zinc finger occupies 2018–2070; the sequence is CSVCGSQDNTEMKDLSLFITCGHLLCSGCVAAHEHQHGQAESTTGEVLCPVDS. One can recognise a Helicase C-terminal domain in the interval 2102–2267; it reads KVMKILDVIR…RMPLDDLDYK (166 aa).

It in the N-terminal section; belongs to the class I-like SAM-binding methyltransferase superfamily. C5-methyltransferase family. This sequence in the C-terminal section; belongs to the SNF2/RAD54 helicase family.

It localises to the nucleus. Its subcellular location is the chromosome. The catalysed reaction is a 2'-deoxycytidine in DNA + S-adenosyl-L-methionine + ATP + H2O = a 5-methyl-2'-deoxycytidine in DNA + S-adenosyl-L-homocysteine + ADP + phosphate + 2 H(+). May play a role in cytosine methylation at palindromic 5'-CG-3' and 5'-C[ACT]G-3' sites in DNA. The protein is DNA (cytosine-5-)-methyltransferase DMT5 of Verticillium dahliae (strain VdLs.17 / ATCC MYA-4575 / FGSC 10137) (Verticillium wilt).